The sequence spans 115 residues: Splicing factor 3B subunit 6-like protein (115 aa).

Positions 9–22 (EVNSILFIKNLSFK) are interaction with pre-mRNA branch site. The RRM domain occupies 12–87 (SILFIKNLSF…RYLVVHYYNP (76 aa)).

Its subcellular location is the nucleus. Its function is as follows. Necessary for the splicing of pre-mRNA. The sequence is that of Splicing factor 3B subunit 6-like protein from Schizosaccharomyces pombe (strain 972 / ATCC 24843) (Fission yeast).